Reading from the N-terminus, the 274-residue chain is Phosphatidylglycerol--prolipoprotein diacylglyceryl transferase (274 aa).

The next 7 helical transmembrane spans lie at leucine 22–alanine 42, leucine 61–tyrosine 81, isoleucine 96–tryptophan 116, phenylalanine 125–isoleucine 145, serine 177–tryptophan 197, glycine 204–valine 224, and isoleucine 238–valine 258. Arginine 144 lines the a 1,2-diacyl-sn-glycero-3-phospho-(1'-sn-glycerol) pocket.

It belongs to the Lgt family.

The protein resides in the cell inner membrane. The enzyme catalyses L-cysteinyl-[prolipoprotein] + a 1,2-diacyl-sn-glycero-3-phospho-(1'-sn-glycerol) = an S-1,2-diacyl-sn-glyceryl-L-cysteinyl-[prolipoprotein] + sn-glycerol 1-phosphate + H(+). Its pathway is protein modification; lipoprotein biosynthesis (diacylglyceryl transfer). Functionally, catalyzes the transfer of the diacylglyceryl group from phosphatidylglycerol to the sulfhydryl group of the N-terminal cysteine of a prolipoprotein, the first step in the formation of mature lipoproteins. This Aeromonas hydrophila subsp. hydrophila (strain ATCC 7966 / DSM 30187 / BCRC 13018 / CCUG 14551 / JCM 1027 / KCTC 2358 / NCIMB 9240 / NCTC 8049) protein is Phosphatidylglycerol--prolipoprotein diacylglyceryl transferase.